Reading from the N-terminus, the 248-residue chain is Ribosomal RNA small subunit methyltransferase G (248 aa).

S-adenosyl-L-methionine contacts are provided by residues glycine 85, phenylalanine 90, 108-110 (DSS), 137-138 (AE), and arginine 156.

Belongs to the methyltransferase superfamily. RNA methyltransferase RsmG family.

The protein localises to the cytoplasm. Specifically methylates the N7 position of a guanine in 16S rRNA. The chain is Ribosomal RNA small subunit methyltransferase G from Prochlorococcus marinus (strain NATL1A).